The primary structure comprises 129 residues: Virion-associated protein (129 aa).

Coiled coils occupy residues 1–31 (MANLNQIQKEVSEILSDQKSMKSDIKAILEL) and 38–59 (TKESLEAVAAKIVNDLTKLIND). The interval 122 to 129 (PAGWPNQF) is capsid binding.

The protein belongs to the caulimovirus ORF III family. In terms of assembly, homotetramer, through coiled-coil domain. Homotrimer when interacts with icosehadral capsid. Interacts with capsid protein, and with Movement protein.

The protein resides in the virion. It localises to the host cell junction. Its subcellular location is the host plasmodesma. Plays a role in virus cell-to-cell and plant-to-plant transmission. Interacts with virion icosahedral capsid and movement protein, thereby facilitating virion cell-to-cell transmission through plasmodesmata opened by viral movement protein. Also interacts with aphid transmission factor, attaching the virion to aphid stylet when the animal feeds on an virus infected plant. Aphid saliva may later detach the virion, inducing release of infectious particles when the animal feeds on a new plant. The chain is Virion-associated protein from Arabidopsis thaliana (Mouse-ear cress).